A 506-amino-acid chain; its full sequence is NAD(P)H-quinone oxidoreductase subunit 2 (506 aa).

A run of 13 helical transmembrane segments spans residues 14–34 (AIIP…VDLA), 42–62 (WAPS…TLQW), 79–99 (LAIA…LISW), 108–128 (PIGE…LLCG), 132–152 (LISV…LSGY), 167–187 (LLVG…LYGL), 206–226 (FITS…IAAV), 240–260 (PTPV…AFAI), 276–296 (LLFT…ALAQ), 302–322 (MLAY…VSGT), 330–350 (VLYL…VILF), 374–394 (LGLS…GFFG), and 409–429 (LLVI…ISVI).

It belongs to the complex I subunit 2 family. As to quaternary structure, NDH-1 can be composed of about 15 different subunits; different subcomplexes with different compositions have been identified which probably have different functions.

The protein resides in the cellular thylakoid membrane. The catalysed reaction is a plastoquinone + NADH + (n+1) H(+)(in) = a plastoquinol + NAD(+) + n H(+)(out). It carries out the reaction a plastoquinone + NADPH + (n+1) H(+)(in) = a plastoquinol + NADP(+) + n H(+)(out). Its function is as follows. NDH-1 shuttles electrons from an unknown electron donor, via FMN and iron-sulfur (Fe-S) centers, to quinones in the respiratory and/or the photosynthetic chain. The immediate electron acceptor for the enzyme in this species is believed to be plastoquinone. Couples the redox reaction to proton translocation, and thus conserves the redox energy in a proton gradient. Cyanobacterial NDH-1 also plays a role in inorganic carbon-concentration. This is NAD(P)H-quinone oxidoreductase subunit 2 from Prochlorococcus marinus (strain MIT 9301).